The sequence spans 507 residues: MSDVNAWWVGGSLLLGIWAIVVFFSPDPLAQYPVINSKRPGELFYTQSKIRFITQARSLLKEGLSKTNNAFRLVTNNRILLVLHSKYRNELRDHKSLNNTKPPEDDFFGWLQGFEPFNHVKTNPKVFAAMVRTKLTPSIGAVGIPLSEETDFVLQQQLTDSPEWHQINVKETSLQLVARLSARIFLGPQVCRNPAWIGIMINYTVEAFMTAERLRMWPRWLLWLVHWFLPSCKKLRSQVQEARGIISQVLQQRERNRKRAFLETEASDEVDTVQWLEDCAKGGYYDPALLQMGLAVVATHTSADLLSQVIFDLCEHPELLQPLREEIVTVITQHGWSKNAIYNLKLLDSVLKESQRLKPMQIISLYRYVTADITLSDGTLIPKGTYIAMIDDHSLDPNSSYTNGDRYDGYRFINMREVPERSHQTQLVSVSSDHTGFGFGNHACPGRFFAATELKIALCHLLLKYDLKLGDQKPQAMTYGFGLSSDPFTQISVRRRQEEISLAGSKS.

The helical transmembrane segment at 4 to 24 threads the bilayer; it reads VNAWWVGGSLLLGIWAIVVFF. N-linked (GlcNAc...) asparagine glycosylation is found at Asn98, Asn202, and Asn398. A heme-binding site is contributed by Cys444.

It belongs to the cytochrome P450 family. It depends on heme as a cofactor.

Its subcellular location is the membrane. It participates in secondary metabolite biosynthesis. Functionally, cytochrome P450 monooxygenase; part of the gene cluster that mediates the biosynthesis of the indole diterpenes penitrems. The geranylgeranyl diphosphate (GGPP) synthase ptmG catalyzes the first step in penitrem biosynthesis via conversion of farnesyl pyrophosphate and isopentyl pyrophosphate into geranylgeranyl pyrophosphate (GGPP). Condensation of indole-3-glycerol phosphate with GGPP by the prenyl transferase ptmC then forms 3-geranylgeranylindole (3-GGI). Epoxidation by the FAD-dependent monooxygenase ptmM leads to a epoxidized-GGI that is substrate of the terpene cyclase ptmB for cyclization to yield paspaline. Paspaline is subsequently converted to 13-desoxypaxilline by the cytochrome P450 monooxygenase ptmP, the latter being then converted to paxilline by the cytochrome P450 monooxygenase ptmQ. Paxilline is converted to beta-paxitriol via C-10 ketoreduction by the short-chain dehydrogenase ptmH which can be monoprenylated at the C-20 by the indole diterpene prenyltransferase ptmD. A two-step elimination (acetylation and elimination) process performed by the O-acetyltransferase ptmV and ptmI leads to the production of the prenylated form of penijanthine. The FAD-linked oxidoreductase ptmO then converts the prenylated form of penijanthine into PC-M5 which is in turn transformed into PC-M4 by the aromatic dimethylallyltransferase ptmE. Five sequential oxidative transformations performed by the cytochrome P450 monooxygenases ptmK, ptmU, ptmL, ptmN and ptmJ yield the various penitrem compounds. PtmK, ptmU and ptmM are involved in the formation of the key bicyclic ring of penitrem C via the formation of the intermediates secopenitrem D and penitrem D. PtmL catalyzes the epoxidation of penitrem D and C to yield penitrem B and F, respectively. PtmJ catalyzes the last benzylic hydroxylation to convert penitrem B to prenitrem E and penitrem F to penitrem A. In Penicillium ochrochloron, this protein is Cytochrome P450 monooxygenase ptmU.